The primary structure comprises 359 residues: Ornithine cyclodeaminase (359 aa).

Positions 53 and 77 each coordinate L-ornithine. Residues Thr92, Arg120, 147-148 (AQ), Asp169, Thr209, 232-235 (VGGD), Lys239, and Ser300 contribute to the NAD(+) site. Residue Arg120 participates in L-ornithine binding. Asp235 provides a ligand contact to L-ornithine. Residue Asp235 is the Proton donor/acceptor of the active site. Val301 is an L-ornithine binding site.

It belongs to the ornithine cyclodeaminase/mu-crystallin family. The cofactor is NAD(+).

It catalyses the reaction L-ornithine = L-proline + NH4(+). It functions in the pathway amino-acid biosynthesis; L-proline biosynthesis; L-proline from L-ornithine: step 1/1. Functionally, catalyzes the conversion of L-ornithine into L-proline with release of ammonia. The polypeptide is Ornithine cyclodeaminase (Brucella abortus biovar 1 (strain 9-941)).